The following is a 307-amino-acid chain: Oligopeptide transport ATP-binding protein OppF (307 aa).

The ABC transporter domain occupies 6 to 251; it reads VEVKDLEISF…PIHPYTQSLL (246 aa). 42-49 is an ATP binding site; sequence GESGSGKT.

It belongs to the ABC transporter superfamily. As to quaternary structure, the complex is composed of two ATP-binding proteins (OppD and OppF), two transmembrane proteins (OppB and OppC) and a solute-binding protein (OppA).

It is found in the cell membrane. It catalyses the reaction a [peptide](out) + ATP + H2O = a [peptide](in) + ADP + phosphate + H(+). Functionally, part of the ABC transporter complex OppABCDF involved in the uptake of oligopeptides. Probably responsible for energy coupling to the transport system. The protein is Oligopeptide transport ATP-binding protein OppF (oppF) of Streptococcus pyogenes serotype M1.